A 547-amino-acid chain; its full sequence is Heme-binding protein A (547 aa).

The N-terminal stretch at 1–18 is a signal peptide; that stretch reads MKLKATLTLAAATLVLAA. C19 carries N-palmitoyl cysteine lipidation. C19 carries the S-diacylglycerol cysteine lipid modification.

This sequence belongs to the bacterial solute-binding protein 5 family.

The protein localises to the cell inner membrane. In terms of biological role, important role in heme acquisition or metabolism. This is Heme-binding protein A (hbpA) from Haemophilus influenzae (strain ATCC 51907 / DSM 11121 / KW20 / Rd).